A 247-amino-acid polypeptide reads, in one-letter code: Probable transcriptional regulatory protein Glov_1245 (247 aa).

The protein belongs to the TACO1 family.

It localises to the cytoplasm. The sequence is that of Probable transcriptional regulatory protein Glov_1245 from Trichlorobacter lovleyi (strain ATCC BAA-1151 / DSM 17278 / SZ) (Geobacter lovleyi).